The sequence spans 349 residues: Protein-glutamate methylesterase/protein-glutamine glutaminase (349 aa).

The Response regulatory domain occupies 2–118 (RVLVVDDSAL…VDLSSVAQEL (117 aa)). The residue at position 52 (aspartate 52) is a 4-aspartylphosphate. Residues 159–345 (VLIGSSTGGP…EEIVRFLEVK (187 aa)) enclose the CheB-type methylesterase domain. Catalysis depends on residues serine 164, histidine 191, and aspartate 287.

It belongs to the CheB family. In terms of processing, phosphorylated by CheA. Phosphorylation of the N-terminal regulatory domain activates the methylesterase activity.

Its subcellular location is the cytoplasm. It carries out the reaction [protein]-L-glutamate 5-O-methyl ester + H2O = L-glutamyl-[protein] + methanol + H(+). It catalyses the reaction L-glutaminyl-[protein] + H2O = L-glutamyl-[protein] + NH4(+). In terms of biological role, involved in chemotaxis. Part of a chemotaxis signal transduction system that modulates chemotaxis in response to various stimuli. Catalyzes the demethylation of specific methylglutamate residues introduced into the chemoreceptors (methyl-accepting chemotaxis proteins or MCP) by CheR. Also mediates the irreversible deamidation of specific glutamine residues to glutamic acid. This chain is Protein-glutamate methylesterase/protein-glutamine glutaminase, found in Archaeoglobus fulgidus (strain ATCC 49558 / DSM 4304 / JCM 9628 / NBRC 100126 / VC-16).